Here is a 365-residue protein sequence, read N- to C-terminus: Transcription factor aptf-1 (365 aa).

2 disordered regions span residues 13–40 (EFVR…PFYE) and 93–126 (TPPQ…SNYS). Positions 223-356 (RRKQANVTAW…MIDESIKYID (134 aa)) are H-S-H (helix-span-helix), dimerization.

This sequence belongs to the AP-2 family. Binds DNA as a dimer. In terms of tissue distribution, expressed in five interneurons AIB, RIB and RIS.

Its subcellular location is the nucleus. Its function is as follows. Transcription factor, which is required in the single sleep-active ring interneuron RIS for sleep-like behavioral quiescence induced by neuropeptide signaling in larvae. Regulates gene expression of sleep-inducing FMRFamide-like neuropeptide flp-11 in RIS. The polypeptide is Transcription factor aptf-1 (Caenorhabditis elegans).